Here is a 73-residue protein sequence, read N- to C-terminus: MIPALTPEERQKLRSAILHRMQLELETTEKLIENIKEETLKKLNLLQQPDATSAPQSKELIREVLEQEGRRIE.

Belongs to the borealin family. Component of the aurora kinase complex composed of at least BIR1, BNL1, IPL1 and SLI15.

The protein localises to the nucleus. It is found in the cytoplasm. It localises to the cytoskeleton. The protein resides in the spindle. Its function is as follows. Component of the aurora kinase complex, also called chromosomal passenger complex (CPC), essential for chromosome segregation and metaphase chromosome alignment. Mediates the SLI15-BIR1 interaction within the CPC. The polypeptide is N-terminal-borealin-like protein (NBL1) (Saccharomyces cerevisiae (strain ATCC 204508 / S288c) (Baker's yeast)).